Consider the following 704-residue polypeptide: mRNA (2'-O-methyladenosine-N(6)-)-methyltransferase (704 aa).

A disordered region spans residues 1 to 33 (MANENHGSPREEASLLSHSPGTSNQSQPCSPKP). Residues 16-29 (LSHSPGTSNQSQPC) show a composition bias toward polar residues. Ser-30 bears the Phosphoserine mark. The WW domain occupies 43 to 77 (ELVHAGWEKCWSRRENRPYYFNRFTNQSLWEMPVL). Residues 88–151 (GLNATPLPQD…PSSPSIPGTP (64 aa)) form a disordered region. The Nuclear localization signal motif lies at 109–113 (KPRKR). A Phosphoserine modification is found at Ser-116. Over residues 136–149 (PTGQSVPSSPSIPG) the composition is skewed to polar residues. Residue Thr-152 is modified to Phosphothreonine. Residues Arg-235 and Arg-265 each coordinate substrate. An S-adenosyl-L-methionine-binding site is contributed by 553-556 (NPPF). Residues Glu-558 and 588 to 592 (WREPP) each bind substrate. Position 614 to 616 (614 to 616 (FEH)) interacts with S-adenosyl-L-methionine. The segment at 663-704 (LSAAYRQSGRSHSSGSSSSSSSEAKDRDSGREQGPSREPHPT) is disordered. A Nuclear localization signal motif is present at residues 669–684 (QSGRSHSSGSSSSSSS). Residues 670–684 (SGRSHSSGSSSSSSS) are compositionally biased toward low complexity. Basic and acidic residues predominate over residues 685–704 (EAKDRDSGREQGPSREPHPT).

The protein belongs to the CAPAM family. In terms of assembly, interacts with POLR2A; interacts with the phosphorylated C-terminal domain (CTD) of POLR2A. Ubiquitous.

It localises to the nucleus. It carries out the reaction a 5'-end (N(7)-methyl 5'-triphosphoguanosine)-(2'-O-methyladenosine) in mRNA + S-adenosyl-L-methionine = a 5'-end (N(7)-methyl 5'-triphosphoguanosine)-(N(6),2'-O-dimethyladenosine) in mRNA + S-adenosyl-L-homocysteine + H(+). With respect to regulation, cap-specific adenosine methyltransferase activity is inhibited by zinc. Functionally, cap-specific adenosine methyltransferase that catalyzes formation of N(6),2'-O-dimethyladenosine cap (m6A(m)) by methylating the adenosine at the second transcribed position of capped mRNAs. Recruited to the early elongation complex of RNA polymerase II (RNAPII) via interaction with POLR2A and mediates formation of m6A(m) co-transcriptionally. This chain is mRNA (2'-O-methyladenosine-N(6)-)-methyltransferase, found in Homo sapiens (Human).